A 193-amino-acid polypeptide reads, in one-letter code: Riboflavin kinase (193 aa).

An H-T-H motif-like region spans residues 1–59 (MGISQQAASQHLRELEDEGLITRNAEGKGISVMVTDKGRHELLRVYNILHDSLHSRPDH). Residues 60–193 (VEITGTLVSG…TIRIPLEQED (134 aa)) are riboflavin kinase. Residue 69–74 (GMNEGA) participates in CDP binding. Thr-98 and Asn-100 together coordinate Mg(2+). The FMN site is built by Thr-156 and Glu-164. 169-172 (LDIR) contributes to the CDP binding site.

Belongs to the archaeal riboflavin kinase family. The cofactor is Mg(2+).

It carries out the reaction riboflavin + CTP = CDP + FMN + H(+). Its pathway is cofactor biosynthesis; FMN biosynthesis; FMN from riboflavin (CTP route): step 1/1. Catalyzes the CTP-dependent phosphorylation of riboflavin (vitamin B2) to form flavin mononucleotide (FMN). The sequence is that of Riboflavin kinase (ribK) from Cenarchaeum symbiosum (strain A).